We begin with the raw amino-acid sequence, 338 residues long: Tetraacyldisaccharide 4'-kinase (338 aa).

ATP is bound at residue 67–74; it reads IAGGAGKT.

This sequence belongs to the LpxK family.

The enzyme catalyses a lipid A disaccharide + ATP = a lipid IVA + ADP + H(+). Its pathway is glycolipid biosynthesis; lipid IV(A) biosynthesis; lipid IV(A) from (3R)-3-hydroxytetradecanoyl-[acyl-carrier-protein] and UDP-N-acetyl-alpha-D-glucosamine: step 6/6. In terms of biological role, transfers the gamma-phosphate of ATP to the 4'-position of a tetraacyldisaccharide 1-phosphate intermediate (termed DS-1-P) to form tetraacyldisaccharide 1,4'-bis-phosphate (lipid IVA). The sequence is that of Tetraacyldisaccharide 4'-kinase from Acidovorax sp. (strain JS42).